A 446-amino-acid polypeptide reads, in one-letter code: O-antigen polymerase (446 aa).

Helical transmembrane passes span 11 to 31 (ICSY…VINE), 33 to 53 (FCEI…VIII), 58 to 78 (QGGF…FILI), 104 to 124 (IYVF…VLLY), 147 to 167 (QLSM…IKSY), 186 to 206 (LYDE…SLLF), 211 to 231 (NFIL…LVGL), 252 to 272 (LKIK…SLFL), 355 to 375 (IYLG…SLAF), 391 to 411 (KLAY…IYFA), and 415 to 435 (LFDF…LSIV).

Its subcellular location is the cell inner membrane. The enzyme catalyses n lipid-linked O-antigen repeat units = a lipid-linked O antigen + (n-1) polyisoprenyl diphosphate.. It functions in the pathway bacterial outer membrane biogenesis; LPS O-antigen biosynthesis. Its function is as follows. Polymerase involved in the biosynthesis of the lipopolysaccharide (LPS). Catalyzes the polymerization of the O-antigen repeat units on the periplasmic face of the inner membrane, leading to the formation of the lipid-linked O-antigen molecule. In vitro, shows a preference for bacteria-based, undecaprenyl-containing substrates rather than eukaryote-based, dolichol-containing substrates. The sequence is that of O-antigen polymerase from Escherichia coli.